Consider the following 317-residue polypeptide: DNA-directed RNA polymerase subunit alpha 2 (317 aa).

Residues 1 to 227 (MALENLLHPT…NQLRNIVDIE (227 aa)) form an alpha N-terminal domain (alpha-NTD) region. The alpha C-terminal domain (alpha-CTD) stretch occupies residues 241–317 (INPILLKHVE…TLIENWPQDL (77 aa)).

This sequence belongs to the RNA polymerase alpha chain family. As to quaternary structure, homodimer. The RNAP catalytic core consists of 2 alpha, 1 beta, 1 beta' and 1 omega subunit. When a sigma factor is associated with the core the holoenzyme is formed, which can initiate transcription.

The enzyme catalyses RNA(n) + a ribonucleoside 5'-triphosphate = RNA(n+1) + diphosphate. DNA-dependent RNA polymerase catalyzes the transcription of DNA into RNA using the four ribonucleoside triphosphates as substrates. The chain is DNA-directed RNA polymerase subunit alpha 2 from Francisella tularensis subsp. holarctica (strain FTNF002-00 / FTA).